The following is a 612-amino-acid chain: Dihydroxy-acid dehydratase (612 aa).

Aspartate 81 provides a ligand contact to Mg(2+). Residue cysteine 122 coordinates [2Fe-2S] cluster. The Mg(2+) site is built by aspartate 123 and lysine 124. Lysine 124 is modified (N6-carboxylysine). Cysteine 195 lines the [2Fe-2S] cluster pocket. Glutamate 491 serves as a coordination point for Mg(2+). Serine 517 (proton acceptor) is an active-site residue.

This sequence belongs to the IlvD/Edd family. In terms of assembly, homodimer. [2Fe-2S] cluster serves as cofactor. It depends on Mg(2+) as a cofactor.

The catalysed reaction is (2R)-2,3-dihydroxy-3-methylbutanoate = 3-methyl-2-oxobutanoate + H2O. It catalyses the reaction (2R,3R)-2,3-dihydroxy-3-methylpentanoate = (S)-3-methyl-2-oxopentanoate + H2O. The protein operates within amino-acid biosynthesis; L-isoleucine biosynthesis; L-isoleucine from 2-oxobutanoate: step 3/4. It functions in the pathway amino-acid biosynthesis; L-valine biosynthesis; L-valine from pyruvate: step 3/4. Functionally, functions in the biosynthesis of branched-chain amino acids. Catalyzes the dehydration of (2R,3R)-2,3-dihydroxy-3-methylpentanoate (2,3-dihydroxy-3-methylvalerate) into 2-oxo-3-methylpentanoate (2-oxo-3-methylvalerate) and of (2R)-2,3-dihydroxy-3-methylbutanoate (2,3-dihydroxyisovalerate) into 2-oxo-3-methylbutanoate (2-oxoisovalerate), the penultimate precursor to L-isoleucine and L-valine, respectively. This chain is Dihydroxy-acid dehydratase, found in Sinorhizobium fredii (strain NBRC 101917 / NGR234).